The sequence spans 288 residues: ATP synthase gamma chain (288 aa).

It belongs to the ATPase gamma chain family. In terms of assembly, F-type ATPases have 2 components, CF(1) - the catalytic core - and CF(0) - the membrane proton channel. CF(1) has five subunits: alpha(3), beta(3), gamma(1), delta(1), epsilon(1). CF(0) has three main subunits: a, b and c.

Its subcellular location is the cell inner membrane. Its function is as follows. Produces ATP from ADP in the presence of a proton gradient across the membrane. The gamma chain is believed to be important in regulating ATPase activity and the flow of protons through the CF(0) complex. The polypeptide is ATP synthase gamma chain (Polaromonas naphthalenivorans (strain CJ2)).